The chain runs to 285 residues: 2-methoxy-6-polyprenyl-1,4-benzoquinol methylase, mitochondrial (285 aa).

The transit peptide at 1 to 30 (MKGATNLFKSMRKPTNVGNFRQFSVNQVNS) directs the protein to the mitochondrion. S-adenosyl-L-methionine is bound by residues T106, D126, 156-157 (NA), and S173.

This sequence belongs to the class I-like SAM-binding methyltransferase superfamily. MenG/UbiE family. In terms of assembly, component of a multi-subunit COQ enzyme complex.

The protein resides in the mitochondrion inner membrane. The enzyme catalyses a 2-methoxy-6-(all-trans-polyprenyl)benzene-1,4-diol + S-adenosyl-L-methionine = a 5-methoxy-2-methyl-3-(all-trans-polyprenyl)benzene-1,4-diol + S-adenosyl-L-homocysteine + H(+). It functions in the pathway cofactor biosynthesis; ubiquinone biosynthesis. Its function is as follows. Methyltransferase required for the conversion of 2-polyprenyl-6-methoxy-1,4-benzoquinol (DDMQH2) to 2-polyprenyl-3-methyl-6-methoxy-1,4-benzoquinol (DMQH2). The sequence is that of 2-methoxy-6-polyprenyl-1,4-benzoquinol methylase, mitochondrial from Caenorhabditis elegans.